The sequence spans 469 residues: IME2-dependent-signaling protein (469 aa).

Residue Met1 is modified to N-acetylmethionine. Thr13 is subject to Phosphothreonine. Disordered stretches follow at residues 22-55, 67-92, and 117-143; these read KSWSESQDNPLLLNFNNSPIGTPTDRYSPEPATM, ARGSTQQQQRLYGSSQTREKSDQQQQ, and DLTLGSPEPSERASPIRQPSVDVPPLT. 3 positions are modified to phosphoserine: Ser23, Ser27, and Ser39. Composition is skewed to polar residues over residues 25–42 and 67–82; these read SESQDNPLLLNFNNSPIG and ARGSTQQQQRLYGSSQ. 5 positions are modified to phosphoserine: Ser122, Ser130, Ser136, Ser147, and Ser148.

Its function is as follows. Seems to act indirectly to modify IME2 activity, thus permitting IME2 to carry out later meiotic functions. This chain is IME2-dependent-signaling protein (IDS2), found in Saccharomyces cerevisiae (strain ATCC 204508 / S288c) (Baker's yeast).